The chain runs to 283 residues: MPVSRYAVFGHPVAHSLSPAIHADFGKQTGIALDYTAIDAAPEEFTAALERFAADGGKGANVTLPLKEAAFALSASPSDRARVAGAVNTLVRNDGQWQGDNTDGAGLVRDLTERHGLDLRGRRVLLLGAGGAARGVAPALLEAGITEMVVVNRSPERADALCDALGEPGRVVSRYLEDLRELGDFELIVNATAAGRDRDAGAFALPLGLVNSLTAAVDLNYGATAIAFLAWARSAQCRYAIDGLGMLVEQAAESFALWHGVRPQTDPVYDALRARDAVLVSAD.

Shikimate contacts are provided by residues 16–18 (SLS) and Thr63. Residue Lys67 is the Proton acceptor of the active site. Position 79 (Asp79) interacts with NADP(+). Positions 88 and 103 each coordinate shikimate. NADP(+) contacts are provided by residues 128 to 132 (GAGGA), Ala223, and Gly243.

This sequence belongs to the shikimate dehydrogenase family. In terms of assembly, homodimer.

The catalysed reaction is shikimate + NADP(+) = 3-dehydroshikimate + NADPH + H(+). The protein operates within metabolic intermediate biosynthesis; chorismate biosynthesis; chorismate from D-erythrose 4-phosphate and phosphoenolpyruvate: step 4/7. Functionally, involved in the biosynthesis of the chorismate, which leads to the biosynthesis of aromatic amino acids. Catalyzes the reversible NADPH linked reduction of 3-dehydroshikimate (DHSA) to yield shikimate (SA). This is Shikimate dehydrogenase (NADP(+)) from Xanthomonas campestris pv. campestris (strain B100).